The following is a 436-amino-acid chain: Probable G-protein coupled receptor C06G4.5 (436 aa).

The Extracellular portion of the chain corresponds to 1 to 53; the sequence is MSTNLVDYVDDSYLNQSMNSENGLDSVTQIMYDMKKYNIVNDVLPPPNHEDLH. Asn15 carries an N-linked (GlcNAc...) asparagine glycan. A helical membrane pass occupies residues 54-74; sequence VVIMAVSYLLLFLLGTCGNVA. The Cytoplasmic segment spans residues 75-94; sequence VLTTIYHVIRSSRATLDNTL. A helical membrane pass occupies residues 95–115; the sequence is IYVIVLSCVDFGVCLSLPITV. Residues 116–132 are Extracellular-facing; sequence IDQILGFWMFGKIPCKL. The helical transmembrane segment at 133–153 threads the bilayer; the sequence is HAVFENFGKILSALILTAMSF. Residues 154 to 171 are Cytoplasmic-facing; it reads DRYAGVCHPQRKRLRSRN. A helical membrane pass occupies residues 172 to 192; that stretch reads FAITILLVLAVYAFITLCPLL. Residues 193–230 lie on the Extracellular side of the membrane; sequence WSFTAREIILYAKETAPGMLTRMKIEKCTVDIDSQMFT. The chain crosses the membrane as a helical span at residues 231–251; that stretch reads AFTIYQFILCYCTPLVLIAFF. The Cytoplasmic segment spans residues 252–281; that stretch reads YTKLLSKLREHTRTFKSSQIPFLHISLYTL. A helical transmembrane segment spans residues 282-302; it reads AVACFYFLCWTPFWMATLFAV. Residues 303 to 316 lie on the Extracellular side of the membrane; sequence YLENSANSSSVPPV. Asn309 is a glycosylation site (N-linked (GlcNAc...) asparagine). The chain crosses the membrane as a helical span at residues 317–337; that stretch reads FVYIMYFIHALPFTNSAINWI. The Cytoplasmic segment spans residues 338–436; the sequence is LYGALNGQLQ…LLSNHNPTFL (99 aa).

Belongs to the G-protein coupled receptor 1 family.

The protein localises to the cell membrane. In terms of biological role, putative receptor. In Caenorhabditis elegans, this protein is Probable G-protein coupled receptor C06G4.5.